A 272-amino-acid chain; its full sequence is MGKNNPFVHSNANFPPLQTHNFEDIPEKGYTIFSSPRIDVFNEERPHSGINLNQYQHHEDDAELQSNNPFLNKDSGVDLLKLHSRSNSRIYEAKPKRVIKPKIAIIECNEMAENPPFWNQNKAFERKVSSKESFNMLGYDKIDKLDSSNSYLGDFGVHHDGPFDPCSKHRNLDAATSPIAAFSSQSEANSLPAFLLPNNSKGVEKSEENEDGVTDNDSSNVNSSTNESPNPTDINVCSNDDATDNTENNLKKKASFIYRLRKHLKRNSIETE.

The tract at residues 193-250 (AFLLPNNSKGVEKSEENEDGVTDNDSSNVNSSTNESPNPTDINVCSNDDATDNTENNL) is disordered. Residues 215-233 (DNDSSNVNSSTNESPNPTD) show a composition bias toward low complexity. Positions 235-248 (NVCSNDDATDNTEN) are enriched in polar residues.

It belongs to the pal1 family.

Its subcellular location is the cytoplasm. It localises to the nucleus. This is an uncharacterized protein from Schizosaccharomyces pombe (strain 972 / ATCC 24843) (Fission yeast).